The sequence spans 690 residues: Serotransferrin (690 aa).

Positions 1-17 (MKPLLLLTLLGCLAAAL) are cleaved as a signal peptide. Transferrin-like domains lie at 24–329 (VKWC…SLKK) and 340–670 (IKWC…SLRK). A disulfide bridge connects residues C27 and C49. D73 and Y103 together coordinate Fe(3+). 3 disulfides stabilise this stretch: C126/C206, C171/C185, and C234/C248. Hydrogencarbonate is bound by residues T128, K132, A134, and G135. Y200 serves as a coordination point for Fe(3+). Fe(3+) is bound at residue H256. 2 disulfide bridges follow: C343–C379 and C353–C370. Positions 394 and 429 each coordinate Fe(3+). 7 disulfide bridges follow: C404-C682, C419-C643, C452-C530, C476-C671, C486-C499, C496-C513, and C570-C584. Positions 454, 458, 460, and 461 each coordinate hydrogencarbonate. Y524 is a binding site for Fe(3+). H592 contacts Fe(3+).

Belongs to the transferrin family. As to quaternary structure, monomer.

The protein localises to the secreted. Functionally, transferrins are iron binding transport proteins which can bind two Fe(3+) ions in association with the binding of an anion, usually bicarbonate. The sequence is that of Serotransferrin (tf) from Oryzias latipes (Japanese rice fish).